The following is a 1066-amino-acid chain: Carbamoyl phosphate synthase large chain (1066 aa).

Positions 1–401 are carboxyphosphate synthetic domain; that stretch reads MPKNNNIKKV…ALMKAVRSLE (401 aa). 12 residues coordinate ATP: R129, R169, G175, G176, R208, I210, E215, G241, V242, H243, Q284, and E298. The region spanning 133 to 327 is the ATP-grasp 1 domain; the sequence is KNTMEKIGEP…IAKVAAKIAL (195 aa). Mg(2+) is bound by residues Q284, E298, and N300. Residues Q284, E298, and N300 each contribute to the Mn(2+) site. Residues 402-547 are oligomerization domain; the sequence is QNIYSMNYGD…YSCFDSENEV (146 aa). Positions 548–931 are carbamoyl phosphate synthetic domain; sequence DATKTKKKVL…ALYKAFLGAG (384 aa). An ATP-grasp 2 domain is found at 673–863; the sequence is DEILEKCCIP…IVSLASKAVL (191 aa). ATP is bound by residues R709, K748, L750, E754, G779, I780, H781, S782, Q822, and E834. Residues Q822, E834, and N836 each contribute to the Mg(2+) site. The Mn(2+) site is built by Q822, E834, and N836. Residues 932 to 1066 form the MGS-like domain; sequence INLPKHKKMI…ELSLIDIARI (135 aa). Residues 932–1066 form an allosteric domain region; sequence INLPKHKKMI…ELSLIDIARI (135 aa).

This sequence belongs to the CarB family. As to quaternary structure, composed of two chains; the small (or glutamine) chain promotes the hydrolysis of glutamine to ammonia, which is used by the large (or ammonia) chain to synthesize carbamoyl phosphate. Tetramer of heterodimers (alpha,beta)4. It depends on Mg(2+) as a cofactor. Requires Mn(2+) as cofactor.

The catalysed reaction is hydrogencarbonate + L-glutamine + 2 ATP + H2O = carbamoyl phosphate + L-glutamate + 2 ADP + phosphate + 2 H(+). It carries out the reaction hydrogencarbonate + NH4(+) + 2 ATP = carbamoyl phosphate + 2 ADP + phosphate + 2 H(+). Its pathway is amino-acid biosynthesis; L-arginine biosynthesis; carbamoyl phosphate from bicarbonate: step 1/1. The protein operates within pyrimidine metabolism; UMP biosynthesis via de novo pathway; (S)-dihydroorotate from bicarbonate: step 1/3. Large subunit of the glutamine-dependent carbamoyl phosphate synthetase (CPSase). CPSase catalyzes the formation of carbamoyl phosphate from the ammonia moiety of glutamine, carbonate, and phosphate donated by ATP, constituting the first step of 2 biosynthetic pathways, one leading to arginine and/or urea and the other to pyrimidine nucleotides. The large subunit (synthetase) binds the substrates ammonia (free or transferred from glutamine from the small subunit), hydrogencarbonate and ATP and carries out an ATP-coupled ligase reaction, activating hydrogencarbonate by forming carboxy phosphate which reacts with ammonia to form carbamoyl phosphate. The chain is Carbamoyl phosphate synthase large chain from Lachnoclostridium phytofermentans (strain ATCC 700394 / DSM 18823 / ISDg) (Clostridium phytofermentans).